The primary structure comprises 426 residues: Histidine--tRNA ligase (426 aa).

It belongs to the class-II aminoacyl-tRNA synthetase family. As to quaternary structure, homodimer.

The protein resides in the cytoplasm. It catalyses the reaction tRNA(His) + L-histidine + ATP = L-histidyl-tRNA(His) + AMP + diphosphate + H(+). This is Histidine--tRNA ligase from Lactiplantibacillus plantarum (strain ATCC BAA-793 / NCIMB 8826 / WCFS1) (Lactobacillus plantarum).